The following is a 497-amino-acid chain: L-amino-acid oxidase BjussuLAAO-I (497 aa).

Residues 1–13 (MNVFFMFSKPGKL) form the signal peptide. C23 and C186 are joined by a disulfide. FAD contacts are provided by residues 56-57 (MS), 76-77 (EA), 76-80 (EASER), Q84, and 100-103 (GPMR). R103 provides a ligand contact to substrate. An N-linked (GlcNAc...) asparagine glycan is attached at N185. Substrate is bound at residue H236. V274 is a binding site for FAD. Residues C344 and C425 are joined by a disulfide bond. Substrate is bound at residue Y385. FAD-binding positions include E470, 477-482 (GWIAST), and 478-482 (WIAST). Residue 477–478 (GW) coordinates substrate.

Belongs to the flavin monoamine oxidase family. FIG1 subfamily. As to quaternary structure, homodimer; non-covalently linked. FAD serves as cofactor. Expressed by the venom gland.

The protein localises to the secreted. The catalysed reaction is an L-alpha-amino acid + O2 + H2O = a 2-oxocarboxylate + H2O2 + NH4(+). The enzyme catalyses L-leucine + O2 + H2O = 4-methyl-2-oxopentanoate + H2O2 + NH4(+). It catalyses the reaction L-phenylalanine + O2 + H2O = 3-phenylpyruvate + H2O2 + NH4(+). It carries out the reaction L-tryptophan + O2 + H2O = indole-3-pyruvate + H2O2 + NH4(+). The catalysed reaction is L-methionine + O2 + H2O = 4-methylsulfanyl-2-oxobutanoate + H2O2 + NH4(+). The enzyme catalyses L-isoleucine + O2 + H2O = (S)-3-methyl-2-oxopentanoate + H2O2 + NH4(+). It catalyses the reaction L-tyrosine + O2 + H2O = 3-(4-hydroxyphenyl)pyruvate + H2O2 + NH4(+). It carries out the reaction L-cysteine + O2 + H2O = 2-oxo-3-sulfanylpropanoate + H2O2 + NH4(+). Functionally, catalyzes an oxidative deamination of predominantly hydrophobic and aromatic L-amino acids, thus producing hydrogen peroxide that may contribute to the diverse toxic effects of this enzyme. Shows high specificity for L-Met, L-Leu, L-Phe, L-Tyr, L-Ile, L-Trp, a moderate activity on L-Cys and low activity on L-Val, L-Lys, L-Arg, L-His, L-Gln, L-Thr and L-Ser. Exhibits diverse biological activities, such as hemorrhage, hemolysis, edema, apoptosis of vascular endothelial cells or tumor cell lines, and antibacterial, as well as regulation of platelet aggregation. Effects of snake L-amino oxidases on platelets are controversial, since they either induce aggregation or inhibit agonist-induced aggregation. These different effects are probably due to different experimental conditions. In vitro, shows parasiticidal activities against both trypanosomes and leishmania, as a result of enzyme-catalyzed hydrogen peroxide production. The sequence is that of L-amino-acid oxidase BjussuLAAO-I from Bothrops jararacussu (Jararacussu).